We begin with the raw amino-acid sequence, 1508 residues long: uncharacterized protein (1508 aa).

Residues 149-267 (ARRQQWRLRR…ARSLQEHRAT (119 aa)) adopt a coiled-coil conformation. Disordered stretches follow at residues 248 to 268 (ERSEREREEAARSLQEHRATE), 345 to 403 (SQDW…LAGS), 536 to 575 (FLKKHPKDLKDTWNNGGGSLAGRTEEGKARGTLGRKGKNL), 725 to 754 (GLEEEDEMPHQEASGLGCRGAPEEPDSQEH), and 868 to 916 (EAKS…AEPW). Basic and acidic residues predominate over residues 868 to 881 (EAKSKESGEGDKPG). Residues 972 to 1034 (ISRLERDNHR…KGNLGQLQKA (63 aa)) adopt a coiled-coil conformation. Disordered regions lie at residues 1158-1186 (LAAGQTGPSTGTGNSRRGADSPPPSLVWR) and 1204-1246 (KEAH…EEDP). The segment covering 1163-1172 (TGPSTGTGNS) has biased composition (polar residues). Residues 1204–1215 (KEAHLEKEEKRP) are compositionally biased toward basic and acidic residues. Residues 1220–1230 (AQGQALSSLSN) are compositionally biased toward polar residues. Positions 1271–1302 (HQASLDEATRLQEELQAKLEELQKKQHEAKLA) form a coiled coil.

This is an uncharacterized protein from Homo sapiens (Human).